The chain runs to 111 residues: MRSSRFLVLMVSLALVTLVASEGVKGNTEKPGVCPADNVRCIKSDPPQCHTDQDCQGIRKCCYLHCGFKCVIPVKELEEGGSKDEDVSRPCPESGWEVKPPGFFSTRCPQK.

Residues M1 to G23 form the signal peptide. Residues N27–V74 enclose the WAP domain. Cystine bridges form between C34–C62, C41–C66, C49–C61, and C55–C70.

The protein resides in the secreted. Functionally, antibacterial protein. Putative acid-stable proteinase inhibitor. This is WAP four-disulfide core domain protein 12 (WFDC12) from Saimiri boliviensis boliviensis (Bolivian squirrel monkey).